Reading from the N-terminus, the 318-residue chain is Probable serine/threonine-protein kinase MRK1 homolog (318 aa).

In terms of domain architecture, Protein kinase spans 40–313; sequence YRYVEMIGRG…ASELLRKQFF (274 aa). ATP contacts are provided by residues 46 to 54 and Lys68; that span reads IGRGSFGVV. The active-site Proton acceptor is Asp159.

It belongs to the protein kinase superfamily. CMGC Ser/Thr protein kinase family. GSK-3 subfamily.

The protein localises to the cytoplasm. It localises to the nucleus. The enzyme catalyses L-seryl-[protein] + ATP = O-phospho-L-seryl-[protein] + ADP + H(+). It catalyses the reaction L-threonyl-[protein] + ATP = O-phospho-L-threonyl-[protein] + ADP + H(+). May play a role in the initiation and completion of mitosis. In Encephalitozoon cuniculi (strain GB-M1) (Microsporidian parasite), this protein is Probable serine/threonine-protein kinase MRK1 homolog (MRK1).